A 269-amino-acid chain; its full sequence is Cytochrome c oxidase subunit 3 (269 aa).

Helical transmembrane passes span 21 to 41 (PWPI…GLTM), 45 to 65 (IVGN…MTMW), 90 to 110 (GFLL…WAYF), 127 to 147 (VGIT…ILLA), 167 to 187 (ALNG…CQYI), 204 to 224 (VFFA…IMLA), and 247 to 267 (ILYL…MYWW).

The protein belongs to the cytochrome c oxidase subunit 3 family. As to quaternary structure, component of the cytochrome c oxidase (complex IV, CIV), a multisubunit enzyme composed of a catalytic core of 3 subunits and several supernumerary subunits. The complex exists as a monomer or a dimer and forms supercomplexes (SCs) in the inner mitochondrial membrane with ubiquinol-cytochrome c oxidoreductase (cytochrome b-c1 complex, complex III, CIII).

It localises to the mitochondrion inner membrane. It catalyses the reaction 4 Fe(II)-[cytochrome c] + O2 + 8 H(+)(in) = 4 Fe(III)-[cytochrome c] + 2 H2O + 4 H(+)(out). In terms of biological role, component of the cytochrome c oxidase, the last enzyme in the mitochondrial electron transport chain which drives oxidative phosphorylation. The respiratory chain contains 3 multisubunit complexes succinate dehydrogenase (complex II, CII), ubiquinol-cytochrome c oxidoreductase (cytochrome b-c1 complex, complex III, CIII) and cytochrome c oxidase (complex IV, CIV), that cooperate to transfer electrons derived from NADH and succinate to molecular oxygen, creating an electrochemical gradient over the inner membrane that drives transmembrane transport and the ATP synthase. Cytochrome c oxidase is the component of the respiratory chain that catalyzes the reduction of oxygen to water. Electrons originating from reduced cytochrome c in the intermembrane space (IMS) are transferred via the dinuclear copper A center (CU(A)) of subunit 2 and heme A of subunit 1 to the active site in subunit 1, a binuclear center (BNC) formed by heme A3 and copper B (CU(B)). The BNC reduces molecular oxygen to 2 water molecules using 4 electrons from cytochrome c in the IMS and 4 protons from the mitochondrial matrix. This is Cytochrome c oxidase subunit 3 (COX3) from Wickerhamomyces canadensis (Yeast).